The sequence spans 294 residues: Tetraspanin-15 (294 aa).

Topologically, residues 1–23 (MPRGDSEQVRYCARFSYLWLKFS) are cytoplasmic. A helical membrane pass occupies residues 24–44 (LVIYSTVFWLIGGLVLSVGIY). Topologically, residues 45–62 (AEVERQKYKTLESAFLAP) are extracellular. Residues 63-83 (AIILILLGVVMFIVSFIGVLA) form a helical membrane-spanning segment. Topologically, residues 84–93 (SLRDNLCLLQ) are cytoplasmic. The helical transmembrane segment at 94–114 (AFMYILGICLIIELIGGVVAL) threads the bilayer. The Extracellular segment spans residues 115 to 235 (IFRNQTIDFL…WFTDNYTIMA (121 aa)). N-linked (GlcNAc...) asparagine glycosylation is present at Asn118. 4 disulfide bridges follow: Cys154–Cys219, Cys155–Cys185, Cys171–Cys179, and Cys186–Cys198. N-linked (GlcNAc...) asparagine glycans are attached at residues Asn189 and Asn230. A helical membrane pass occupies residues 236–256 (GVLLGILLPQFLGVLLTFLYI). Over 257-294 (TRVEDIITEHSVTDGLLGPGTKAGVEAAGTGCCMCYPI) the chain is Cytoplasmic.

Belongs to the tetraspanin (TM4SF) family. As to quaternary structure, interacts with ADAM10; the interaction influences ADAM10 substrate specificity, endocytosis and turnover. In terms of processing, palmitoylated.

It is found in the cell membrane. The protein localises to the late endosome membrane. Its function is as follows. Part of TspanC8 subgroup, composed of 6 members that interact with the transmembrane metalloprotease ADAM10. This interaction is required for ADAM10 exit from the endoplasmic reticulum and for enzymatic maturation and trafficking to the cell surface as well as substrate specificity. Different TspanC8/ADAM10 complexes have distinct substrates. Promotes ADAM10-mediated cleavage of CDH2. Negatively regulates ligand-induced Notch activity probably by regulating ADAM10 activity. The polypeptide is Tetraspanin-15 (TSPAN15) (Bos taurus (Bovine)).